The following is a 406-amino-acid chain: Peptidase T (406 aa).

His-78 serves as a coordination point for Zn(2+). Asp-80 is a catalytic residue. Asp-139 provides a ligand contact to Zn(2+). Residue Glu-173 is the Proton acceptor of the active site. Zn(2+)-binding residues include Glu-174, Asp-196, and His-378.

The protein belongs to the peptidase M20B family. Zn(2+) is required as a cofactor.

The protein resides in the cytoplasm. It catalyses the reaction Release of the N-terminal residue from a tripeptide.. In terms of biological role, cleaves the N-terminal amino acid of tripeptides. The protein is Peptidase T of Clostridium perfringens (strain 13 / Type A).